The following is a 351-amino-acid chain: MSDKKPSLSYKDAGVDIDAGNALVERIKGVTKRTHRPEVMGNIGGFGALCEIPAGYKQPVLVSGTDGVGTKLRLAIDLKRHRGVGIDLVAMCVNDLIVQGAEPLFFLDYYATGKLDVDVAADVVAGIGDGCEQSGCALIGGETAEMPGMYEGGDYDLAGFCTGVVEKSEIIDGTKVADGDALIALASSGPHSNGYSLIRKIIEVSGADLESHLQGKTLADHLLEPTRIYVKPVLELIKHVPVHALSHITGGGFWENIPRVLPKGSKAVIDGNSWDWPVIFDWLKENGNISMKEMYRTFNCGVGMVIAVPNEQADKAIQILTDAGEDAWKIGRIANAAEGEEQVDILADETH.

The protein belongs to the AIR synthase family.

The protein localises to the cytoplasm. The enzyme catalyses 2-formamido-N(1)-(5-O-phospho-beta-D-ribosyl)acetamidine + ATP = 5-amino-1-(5-phospho-beta-D-ribosyl)imidazole + ADP + phosphate + H(+). It functions in the pathway purine metabolism; IMP biosynthesis via de novo pathway; 5-amino-1-(5-phospho-D-ribosyl)imidazole from N(2)-formyl-N(1)-(5-phospho-D-ribosyl)glycinamide: step 2/2. In Idiomarina loihiensis (strain ATCC BAA-735 / DSM 15497 / L2-TR), this protein is Phosphoribosylformylglycinamidine cyclo-ligase.